A 414-amino-acid polypeptide reads, in one-letter code: Tar DNA-binding protein homolog 1 (414 aa).

2 stretches are compositionally biased toward basic and acidic residues: residues 1–44 and 153–167; these read MADE…KTTD and DDGRDGRSGRKRAVE. Disordered stretches follow at residues 1 to 58 and 132 to 167; these read MADE…GDEP and SSADATSAKRRKVGSSDDSDSDDGRDGRSGRKRAVE. RRM domains are found at residues 173 to 259 and 262 to 341; these read VDLI…QGRP and SRIF…IAQP. The interval 343 to 414 is disordered; sequence EENNQSVGPD…APGDSRGPGW (72 aa). The segment covering 361-373 has biased composition (basic and acidic residues); it reads NRRERDRPDRRPI.

In terms of assembly, interacts with chromobox protein homolog hpl-2; interaction may maintain localization of hpl-2 to gene bodies. Widely expressed in a range of tissues including body wall muscles, pharynx and neurons of the midbody in adults and larvae.

Its subcellular location is the nucleus. It localises to the cytoplasm. RNA-binding protein which regulates transcription, splicing and RNA-editing. Limits the accumulation of double-stranded RNA by maintaining the abundance of the mature RNA transcripts that are formed from double-stranded precursor RNAs. Stress response protein that acts downstream of daf-16 in the insulin/IGF pathway to regulate longevity and the cellular stress response to osmotic, oxidative, proteotoxic and endoplasmic reticulum stress. Involved in the regulation of physiological processes including aging, fertility, growth and locomotion. Plays a role in maintaining localization of chromobox protein homolog hpl-2 to gene bodies, perhaps acting via binding to nascent RNA transcripts. The sequence is that of Tar DNA-binding protein homolog 1 from Caenorhabditis elegans.